A 485-amino-acid chain; its full sequence is NADH-quinone oxidoreductase subunit N (485 aa).

Helical transmembrane passes span 8–28, 35–55, 71–91, 105–125, 127–147, 159–179, 203–223, 235–255, 271–291, 297–317, 326–346, 373–393, 408–430, and 455–475; these read LIAL…MLSI, FLNA…LWFV, GFAM…CTFA, FYLL…ANHL, SLFL…GYAF, YTIL…LVYA, LLAG…LVPF, PAPV…GVVM, VVLA…ALSQ, LLGY…IALQ, VGVY…VVSL, AAVM…LGFI, WWLV…RVAV, and IVVL…QPLI.

The protein belongs to the complex I subunit 2 family. NDH-1 is composed of 13 different subunits. Subunits NuoA, H, J, K, L, M, N constitute the membrane sector of the complex.

The protein resides in the cell inner membrane. It carries out the reaction a quinone + NADH + 5 H(+)(in) = a quinol + NAD(+) + 4 H(+)(out). NDH-1 shuttles electrons from NADH, via FMN and iron-sulfur (Fe-S) centers, to quinones in the respiratory chain. The immediate electron acceptor for the enzyme in this species is believed to be ubiquinone. Couples the redox reaction to proton translocation (for every two electrons transferred, four hydrogen ions are translocated across the cytoplasmic membrane), and thus conserves the redox energy in a proton gradient. In Escherichia coli O6:K15:H31 (strain 536 / UPEC), this protein is NADH-quinone oxidoreductase subunit N.